The primary structure comprises 91 residues: Large ribosomal subunit protein bL31 (91 aa).

The disordered stretch occupies residues 62–91; the sequence is RRKYSGTKPQQTAKGKKAAPKSTPKTNKKG.

It belongs to the bacterial ribosomal protein bL31 family. Type A subfamily. As to quaternary structure, part of the 50S ribosomal subunit.

In terms of biological role, binds the 23S rRNA. This is Large ribosomal subunit protein bL31 from Thermosynechococcus vestitus (strain NIES-2133 / IAM M-273 / BP-1).